Consider the following 297-residue polypeptide: Palmitoyl-protein thioesterase ABHD10, mitochondrial (297 aa).

The N-terminal 43 residues, 1 to 43 (MAAWVPCRKWGWAAVSFGRHRGLIASLARKPPWAWWLSACRQK), are a transit peptide targeting the mitochondrion. The region spanning 69–181 (IIFIPGYLSN…GVVTQFHSLP (113 aa)) is the AB hydrolase-1 domain. Residues serine 143, aspartate 240, and histidine 270 each act as charge relay system in the active site.

This sequence belongs to the AB hydrolase superfamily. In terms of tissue distribution, expressed in epididymal sperm but not in testicular sperm (at protein level).

The protein localises to the mitochondrion. It carries out the reaction S-hexadecanoyl-L-cysteinyl-[protein] + H2O = L-cysteinyl-[protein] + hexadecanoate + H(+). The catalysed reaction is mycophenolic acid O-acyl-beta-D-glucuronide + H2O = mycophenolate + D-glucuronate + H(+). Its activity is regulated as follows. Inhibited by palmostatin-B. Acts as an acyl-protein thioesterase that hydrolyzes fatty acids from acylated residues in proteins. Regulates the mitochondrial S-depalmitoylation of the nucleophilic active site residue of peroxiredoxin-5/PRDX5, a key antioxidant protein, therefore modulating mitochondrial antioxidant ability. Also catalyzes the deglucuronidation of mycophenolic acid acyl-glucuronide, an active metabolite of the immunosuppressant drug mycophenolate. In Rattus norvegicus (Rat), this protein is Palmitoyl-protein thioesterase ABHD10, mitochondrial.